A 1010-amino-acid chain; its full sequence is Lethal(2) giant larvae protein homolog SRO77 (1010 aa).

WD repeat units lie at residues 47 to 80 (TVTT…VVFT), 87 to 122 (IKHM…TTVF), 127 to 163 (ITCI…KLKI), 182 to 215 (SIQW…KQHF), 240 to 275 (VIQS…IHAR), 299 to 364 (AIFK…QKLF), 372 to 407 (LINF…ETLI), 431 to 504 (VTTC…FEVN), 518 to 595 (KNIS…STVI), 602 to 637 (VSAI…FNEN), 649 to 700 (VSTV…DATK), 709 to 763 (GINS…THAL), 768 to 815 (IATS…KNLR), and 829 to 852 (SILE…SVLN). The interval 932–958 (SNAARKLPPGTEDHRYARPVRSSGRSN) is disordered.

It belongs to the WD repeat L(2)GL family. In terms of assembly, interacts with SEC9.

Its function is as follows. Acts as an allosteric regulator of polarized exocytosis by promoting the targeted fusion of vesicles with the plasma membrane. Involved in maintenance of ion homeostasis in cells exposed to NaCl stress. May be involved in the targeting of the myosin proteins to their intrinsic pathways. Multicopy suppressor of RHO3. May also participate in the maintenance of cell polarity and bud growth. The polypeptide is Lethal(2) giant larvae protein homolog SRO77 (SRO77) (Saccharomyces cerevisiae (strain ATCC 204508 / S288c) (Baker's yeast)).